Consider the following 329-residue polypeptide: tRNA pseudouridine synthase B (329 aa).

Histidine 43 lines the substrate pocket. Aspartate 48 (nucleophile) is an active-site residue. Substrate-binding residues include tyrosine 76, tyrosine 179, and leucine 200.

It belongs to the pseudouridine synthase TruB family. Type 1 subfamily.

The enzyme catalyses uridine(55) in tRNA = pseudouridine(55) in tRNA. Functionally, responsible for synthesis of pseudouridine from uracil-55 in the psi GC loop of transfer RNAs. The chain is tRNA pseudouridine synthase B from Yersinia enterocolitica serotype O:8 / biotype 1B (strain NCTC 13174 / 8081).